The following is a 549-amino-acid chain: CTP synthase (549 aa).

The interval 1–267 (MAKFVFITGG…CREVLDVLNL (267 aa)) is amidoligase domain. Residue serine 13 coordinates CTP. Position 13 (serine 13) interacts with UTP. Residues 14 to 19 (SIGKGI) and aspartate 71 each bind ATP. Mg(2+)-binding residues include aspartate 71 and glutamate 141. CTP-binding positions include 148–150 (DIE), 188–193 (KTKPTQ), and lysine 224. UTP-binding positions include 188–193 (KTKPTQ) and lysine 224. The region spanning 292–534 (KIALVGKYVQ…IEAAQQRLPD (243 aa)) is the Glutamine amidotransferase type-1 domain. L-glutamine is bound at residue glycine 354. Residue cysteine 381 is the Nucleophile; for glutamine hydrolysis of the active site. L-glutamine contacts are provided by residues 382–385 (LGMQ), glutamate 405, and arginine 462. Residues histidine 507 and glutamate 509 contribute to the active site.

This sequence belongs to the CTP synthase family. As to quaternary structure, homotetramer.

It catalyses the reaction UTP + L-glutamine + ATP + H2O = CTP + L-glutamate + ADP + phosphate + 2 H(+). The enzyme catalyses L-glutamine + H2O = L-glutamate + NH4(+). It carries out the reaction UTP + NH4(+) + ATP = CTP + ADP + phosphate + 2 H(+). Its pathway is pyrimidine metabolism; CTP biosynthesis via de novo pathway; CTP from UDP: step 2/2. Its activity is regulated as follows. Allosterically activated by GTP, when glutamine is the substrate; GTP has no effect on the reaction when ammonia is the substrate. The allosteric effector GTP functions by stabilizing the protein conformation that binds the tetrahedral intermediate(s) formed during glutamine hydrolysis. Inhibited by the product CTP, via allosteric rather than competitive inhibition. In terms of biological role, catalyzes the ATP-dependent amination of UTP to CTP with either L-glutamine or ammonia as the source of nitrogen. Regulates intracellular CTP levels through interactions with the four ribonucleotide triphosphates. In Synechococcus sp. (strain CC9605), this protein is CTP synthase.